We begin with the raw amino-acid sequence, 98 residues long: Small ribosomal subunit protein uS19 (98 aa).

2 disordered regions span residues 1–30 and 78–98; these read MARSIKKGPFADKHLTKKVEDANKGNKKSV and RTFHGHSAEKKAAAAPAPAKK. Over residues 9–24 the composition is skewed to basic and acidic residues; sequence PFADKHLTKKVEDANK.

Belongs to the universal ribosomal protein uS19 family.

In terms of biological role, protein S19 forms a complex with S13 that binds strongly to the 16S ribosomal RNA. The sequence is that of Small ribosomal subunit protein uS19 from Anaeromyxobacter dehalogenans (strain 2CP-1 / ATCC BAA-258).